The following is a 92-amino-acid chain: PqqA binding protein (92 aa).

This sequence belongs to the PqqD family. As to quaternary structure, monomer. Interacts with PqqE.

The protein operates within cofactor biosynthesis; pyrroloquinoline quinone biosynthesis. In terms of biological role, functions as a PqqA binding protein and presents PqqA to PqqE, in the pyrroloquinoline quinone (PQQ) biosynthetic pathway. This Klebsiella pneumoniae (strain 342) protein is PqqA binding protein.